Here is a 642-residue protein sequence, read N- to C-terminus: Regulator of MON1-CCZ1 complex (642 aa).

The 155-residue stretch at 462–616 folds into the Mic1 domain; that stretch reads RPYTESILML…KLYETLSFPK (155 aa).

It belongs to the RMC1 family. In terms of assembly, component of the Mon1-Ccz1 guanyl-nucleotide exchange factor complex made up of Mon1, Ccz1 and Bulli; the interaction of Bulli with the Mon1-Ccz1 heterodimer is mediated via the C-terminal Mic1 domain of Bulli. Mon1 and Ccz1 form a stable complex which displays Rab7 GEF activity with or without Bulli; GEF activity is enhanced by Bulli possibly by improving membrane association of the complex.

The protein resides in the late endosome. Positive regulator of the Rab7 guanyl-nucleotide exchange activity of the Mon1-Ccz1 complex, possibly by enhancing its endosomal membrane association. As part of the Mon1-Ccz1 complex involved in endolysosomal biogenesis possibly by mediating Rab conversion, the replacement of Rab5 with Rab7 during late endosome maturation. The chain is Regulator of MON1-CCZ1 complex from Drosophila melanogaster (Fruit fly).